Here is a 117-residue protein sequence, read N- to C-terminus: Ribosome-binding factor A (117 aa).

It belongs to the RbfA family. As to quaternary structure, monomer. Binds 30S ribosomal subunits, but not 50S ribosomal subunits or 70S ribosomes.

It localises to the cytoplasm. Functionally, one of several proteins that assist in the late maturation steps of the functional core of the 30S ribosomal subunit. Associates with free 30S ribosomal subunits (but not with 30S subunits that are part of 70S ribosomes or polysomes). Required for efficient processing of 16S rRNA. May interact with the 5'-terminal helix region of 16S rRNA. The sequence is that of Ribosome-binding factor A from Leptospira borgpetersenii serovar Hardjo-bovis (strain JB197).